The primary structure comprises 333 residues: ATP synthase subunit a (333 aa).

An N-terminal signal peptide occupies residues 1–32 (MIYLHNKRKGMLKRLSALIVIGLLMNLPAVFA). 7 helical membrane passes run 100–120 (HVVM…GVGN), 161–181 (FMPF…IGLV), 185–205 (ATAT…FLVT), 229–249 (LMWI…PFAL), 254–274 (FANM…IFVF), 279–299 (IAPV…LVAF), and 300–320 (LQAY…VAHE).

It belongs to the ATPase A chain family. As to quaternary structure, F-type ATPases have 2 components, CF(1) - the catalytic core - and CF(0) - the membrane proton channel. CF(1) has five subunits: alpha(3), beta(3), gamma(1), delta(1), epsilon(1). CF(0) has four main subunits: a, b, b' and c.

It localises to the cell inner membrane. Its function is as follows. Key component of the proton channel; it plays a direct role in the translocation of protons across the membrane. This Chloroherpeton thalassium (strain ATCC 35110 / GB-78) protein is ATP synthase subunit a.